The sequence spans 104 residues: Putative ankyrin repeat protein L677 (104 aa).

ANK repeat units lie at residues 16 to 43 (FNKSSLEIACIENDIGTVKKIINLNPNL), 44 to 73 (DISHCLNLAIESKNYQIVKFLLKKNISNSV), and 75 to 102 (LEAYDCACINGKISIMELLIQYLNNKSI).

The polypeptide is Putative ankyrin repeat protein L677 (Acanthamoeba polyphaga (Amoeba)).